A 478-amino-acid chain; its full sequence is Lysosome membrane protein 2 (478 aa).

The Cytoplasmic segment spans residues 1–4 (MGRC). The chain crosses the membrane as a helical span at residues 5–27 (CFYTAGTLSLLLLVTSVTLLVAR). At 28-433 (VFQKAVDQTI…QLKSVINTTL (406 aa)) the chain is on the lumenal side. Residues Asn-45, Asn-68, Asn-105, and Asn-122 are each glycosylated (N-linked (GlcNAc...) asparagine). Positions 155-191 (LIEAMLKAYQQKLFVIHTVHELLWGYKDEILSLVHIF) are important for interaction with GBA1. N-linked (GlcNAc...) asparagine glycans are attached at residues Asn-206, Asn-224, Asn-249, and Asn-304. 2 cysteine pairs are disulfide-bonded: Cys-274–Cys-329 and Cys-312–Cys-318. Asn-325, Asn-412, and Asn-430 each carry an N-linked (GlcNAc...) asparagine glycan. Residues 434–459 (VVTNIPYIIMALGVFFGLVFTWLACR) form a helical membrane-spanning segment. At 460–478 (GQGSMDEGTADERAPLIRT) the chain is on the cytoplasmic side.

It belongs to the CD36 family. As to quaternary structure, interacts with GBA1. Post-translationally, acylated by palmitic acid group(s). In terms of processing, heavily glycosylated. Detected in the extracts of brain, heart, lung, liver and kidney.

The protein localises to the lysosome membrane. Its function is as follows. Acts as a lysosomal receptor for glucosylceramidase (GBA1) targeting. This Mus musculus (Mouse) protein is Lysosome membrane protein 2 (Scarb2).